Consider the following 452-residue polypeptide: Zinc finger protein GAI-ASSOCIATED FACTOR 1 (452 aa).

Residues 1–32 (MPVDLDNSSTVSGEASVSISSTGNQNPLPNST) are compositionally biased toward polar residues. The tract at residues 1–47 (MPVDLDNSSTVSGEASVSISSTGNQNPLPNSTGKKKRNLPGMPDPES) is disordered. At S53 the chain carries Phosphoserine. 2 consecutive C2H2-type zinc fingers follow at residues 63-85 (FVCE…RRGH) and 104-134 (YVCP…CRKH). Residues 126 to 133 (IKKHFCRK) carry the Nuclear localization signal motif. A C2H2-type 2; degenerate zinc finger spans residues 139–162 (WKCDKCSKKYAVQSDWKAHSKICG). Residues C141, C144, H157, C161, C168, C170, H183, and C187 each coordinate Zn(2+). A CCHC-type 2; atypical zinc finger spans residues 166 to 189 (YKCDCGTLFSRRDSFITHRAFCDA). The segment at 176-188 (RRDSFITHRAFCD) is SHR-binding. A disordered region spans residues 196–254 (RSHHSQSKKQNPEILTRKNPVPNPVPAPVDTESAKIKSSSTLTIKQSESPKTPPEIVQE). A compositionally biased stretch (polar residues) spans 231-245 (IKSSSTLTIKQSESP).

In terms of assembly, interacts with the DELLA proteins (e.g. GAI/RGA2, RGA, RGL1, RGL2 and RGLG3), acting as coactivators and with TPR1 and TPR4, acting as a corepressors, at the promoter of GA20OX2 gene. As to expression, observed in vegetative tissues. Mainly expressed in hypocotyls, petioles, shoot apices, root tips, and trichomes, and, at low levels, in leaves, stems and flowers.

The protein localises to the nucleus. With respect to regulation, transcription activation is repressed by gibberellic acid GA(3) in the presence of TPR4. Transcription factor that acts as a positive regulator of gibberellin (GA) action, homeostasis and signaling. GA converts the GAF1 complex from transcriptional activator to repressor via the degradation of DELLA proteins. The chain is Zinc finger protein GAI-ASSOCIATED FACTOR 1 from Arabidopsis thaliana (Mouse-ear cress).